The sequence spans 519 residues: NAD-dependent histone deacetylase SIR2 (519 aa).

The disordered stretch occupies residues 154–212; sequence EIDENDNKNDGTNNSDIDSDIDSNSDMDSQSESGELDDAMDVDDSLSENEDEYDQDMST. Acidic residues predominate over residues 187-208; it reads GELDDAMDVDDSLSENEDEYDQ. Residues 221–486 enclose the Deacetylase sirtuin-type domain; the sequence is MTPFKYKLPD…SYLCKCLKWD (266 aa). NAD(+)-binding positions include 246 to 265 and 328 to 331; these read GAGISTSLGIPDFRSFKGLY and QNID. The Proton acceptor role is filled by H348. 4 residues coordinate Zn(2+): C356, C359, C380, and C383. NAD(+) is bound by residues 430–432, 455–457, and C472; these read GTS and NKD.

This sequence belongs to the sirtuin family. Class I subfamily. As to quaternary structure, interacts with HXK1. It depends on Zn(2+) as a cofactor.

It localises to the nucleus. The enzyme catalyses N(6)-acetyl-L-lysyl-[protein] + NAD(+) + H2O = 2''-O-acetyl-ADP-D-ribose + nicotinamide + L-lysyl-[protein]. NAD-dependent deacetylase. Heterochromatin component that silences transcription at silent mating loci, telomeres and the ribosomal DNA, and that also suppresses recombination in the rDNA and extends replicative life span. It acts as a NAD-dependent histone deacetylase, which deacetylates 'Lys-9' and 'Lys-14' of Histone H3 and 'Lys-16' of Histone H4. Functions in the distribution of oxidatively damaged proteins during cell division. Mediates phenotypic switching. This chain is NAD-dependent histone deacetylase SIR2, found in Candida albicans (strain SC5314 / ATCC MYA-2876) (Yeast).